The sequence spans 262 residues: Transmembrane protein 270 (262 aa).

5 helical membrane-spanning segments follow: residues 6 to 26 (LVRS…ALLI), 30 to 50 (AHLY…LLGL), 67 to 87 (PVGR…CLAL), 92 to 112 (LVWA…KWLG), and 127 to 147 (LFLS…LLVW). Residues 226–262 (QEAEPQKALGLSSETPPPGPPAPGARPVLPEPGTPGE) are disordered. A compositionally biased stretch (pro residues) spans 240 to 262 (TPPPGPPAPGARPVLPEPGTPGE).

The protein resides in the membrane. The chain is Transmembrane protein 270 from Bos taurus (Bovine).